Reading from the N-terminus, the 74-residue chain is Putative antitoxin VapB48 (74 aa).

Possibly the antitoxin component of a type II toxin-antitoxin (TA) system. Its cognate toxin is VapC48 (Potential). The chain is Putative antitoxin VapB48 (vapB48) from Mycobacterium tuberculosis (strain CDC 1551 / Oshkosh).